Reading from the N-terminus, the 346-residue chain is Protein STAR1 (346 aa).

The disordered stretch occupies residues 23–48 (QRPPPNGTVHACSKSRPPQLEPGKVG). An ABC transporter domain is found at 112–344 (IRVRGLTRRS…KHPMARRFLE (233 aa)). An ATP-binding site is contributed by 146-153 (GPSGSGKS).

It belongs to the ABC transporter superfamily. ABCI family. As to quaternary structure, interacts with STAR2. Expressed in roots.

The protein localises to the membrane. In terms of biological role, associates with STAR2 to form a functional transmembrane ABC transporter required for detoxification of aluminum (Al) in roots. Can specifically transport UDP-glucose. This is Protein STAR1 from Oryza sativa subsp. japonica (Rice).